Consider the following 341-residue polypeptide: MEPAFGEVNQLGGVFVNGRPLPNAIRLRIVELAQLGIRPCDISRQLRVSHGCVSKILARYNETGSILPGAIGGSKPRVTTPTVVKHIRTYKQRDPGIFAWEIRDRLLADGVCDKYNVPSVSSISRILRNKIGNLAQQGHYDSYKQHQPTPQPALPYNHIYSYPSPITAAAAKVPTPPGVPAIPGSVAMPRTWPSSHSVTDILGIRSITDQVSDSSPYHSPKVEEWSSLGRNNFPATAPHAVNGLEKGVLEQEAKYGQAPNGLPAVGSFVSASSMAPYPTPAQVSPYMTYSAAPSGYVAGHGWQHAGSTPLSPHNCDIPASLAFKGMQAAREGSHSVTASAL.

Positions 4 to 130 (AFGEVNQLGG…SSISRILRNK (127 aa)) form a DNA-binding region, paired. A PAI subdomain region spans residues 7–63 (EVNQLGGVFVNGRPLPNAIRLRIVELAQLGIRPCDISRQLRVSHGCVSKILARYNET). Positions 82 to 130 (TVVKHIRTYKQRDPGIFAWEIRDRLLADGVCDKYNVPSVSSISRILRNK) are RED subdomain. Positions 168-189 (AAAAKVPTPPGVPAIPGSVAMP) are interaction with KDM5B.

In terms of assembly, interacts with KDM5B.

Its subcellular location is the nucleus. Transcription factor required for normal development of thymus, parathyroid glands, ultimobranchial bodies, teeth, skeletal elements of skull and larynx as well as distal limbs. The protein is Paired box protein Pax-9 (PAX9) of Macaca mulatta (Rhesus macaque).